The primary structure comprises 283 residues: MGASASTNEQIIENRILNEAYNSCPSVGTANVTTLSGIKFEAPANCNPPSAFVIGQTATVDSNCLLTSLQKGAASAASKLSSQSKAGLGISVSTNISEVENSIANITNNTCAGLATNNVVDITDTVIKACQFRVVQNASSKVSCQINNTQNLISKIAADATSQAKGGSLFGDLFGGGLGGIIAAIIIIVIIAVIIGAVVYFIKQSSKNKGAEKIIENPETAALLVGGFKSFIGGASDFVDGLKKTNMYKFIVLLIMVLIIVILLKTLDIPNPINHPNDSNRIY.

Gly-2 is lipidated: N-myristoyl glycine; by host. Residues Asn-31, Asn-95, Asn-105, Asn-108, Asn-137, and Asn-147 are each glycosylated (N-linked (GlcNAc...) asparagine; by host). A run of 2 helical transmembrane segments spans residues 181–201 (IIAAIIIIVIIAVIIGAVVYF) and 250–270 (FIVLLIMVLIIVILLKTLDIP). An N-linked (GlcNAc...) asparagine; by host glycan is attached at Asn-277.

The protein localises to the membrane. This is an uncharacterized protein from Acanthamoeba polyphaga (Amoeba).